We begin with the raw amino-acid sequence, 248 residues long: Probable transcriptional regulatory protein Mpop_0922 (248 aa).

The protein belongs to the TACO1 family.

It is found in the cytoplasm. This chain is Probable transcriptional regulatory protein Mpop_0922, found in Methylorubrum populi (strain ATCC BAA-705 / NCIMB 13946 / BJ001) (Methylobacterium populi).